The following is a 397-amino-acid chain: ATP-dependent RNA helicase eIF4A (397 aa).

The short motif at 23–51 is the Q motif element; the sequence is YKFDDLNLKPNIVRGIFGYGYETPSAIQQ. The region spanning 54-224 is the Helicase ATP-binding domain; the sequence is ILPITEGRDV…TKFMNNPVRI (171 aa). Residue 67–74 participates in ATP binding; it reads AQSGTGKT. The DEAD box signature appears at 172-175; that stretch reads DEAD. Residues 255–396 enclose the Helicase C-terminal domain; that stretch reads DLYDSISVTQ…EMPADIGSLF (142 aa).

The protein belongs to the DEAD box helicase family. eIF4A subfamily. In terms of assembly, component of the eIF4F complex, which composition varies with external and internal environmental conditions. It is composed of at least eIF4A, eIF4E and eIF4G.

It is found in the cytoplasm. The enzyme catalyses ATP + H2O = ADP + phosphate + H(+). In terms of biological role, ATP-dependent RNA helicase which is a subunit of the eIF4F complex involved in cap recognition and is required for mRNA binding to ribosome. In the current model of translation initiation, eIF4A unwinds RNA secondary structures in the 5'-UTR of mRNAs which is necessary to allow efficient binding of the small ribosomal subunit, and subsequent scanning for the initiator codon. The sequence is that of ATP-dependent RNA helicase eIF4A (TIF1) from Lodderomyces elongisporus (strain ATCC 11503 / CBS 2605 / JCM 1781 / NBRC 1676 / NRRL YB-4239) (Yeast).